The following is a 280-amino-acid chain: 3-methyl-2-oxobutanoate hydroxymethyltransferase (280 aa).

Residues Asp45 and Asp84 each contribute to the Mg(2+) site. 3-methyl-2-oxobutanoate contacts are provided by residues Asp45 to Ser46, Asp84, and Lys114. Glu116 contributes to the Mg(2+) binding site. Glu183 serves as the catalytic Proton acceptor.

The protein belongs to the PanB family. Homodecamer; pentamer of dimers. Mg(2+) is required as a cofactor.

The protein resides in the cytoplasm. It catalyses the reaction 3-methyl-2-oxobutanoate + (6R)-5,10-methylene-5,6,7,8-tetrahydrofolate + H2O = 2-dehydropantoate + (6S)-5,6,7,8-tetrahydrofolate. Its pathway is cofactor biosynthesis; (R)-pantothenate biosynthesis; (R)-pantoate from 3-methyl-2-oxobutanoate: step 1/2. Its function is as follows. Catalyzes the reversible reaction in which hydroxymethyl group from 5,10-methylenetetrahydrofolate is transferred onto alpha-ketoisovalerate to form ketopantoate. In Clostridium kluyveri (strain ATCC 8527 / DSM 555 / NBRC 12016 / NCIMB 10680 / K1), this protein is 3-methyl-2-oxobutanoate hydroxymethyltransferase.